The chain runs to 365 residues: Probable dual-specificity RNA methyltransferase RlmN (365 aa).

Catalysis depends on Glu-106, which acts as the Proton acceptor. In terms of domain architecture, Radical SAM core spans 112–352 (YPDRVTLCVS…VTVRDTRGRE (241 aa)). A disulfide bond links Cys-119 and Cys-357. [4Fe-4S] cluster contacts are provided by Cys-126, Cys-130, and Cys-133. S-adenosyl-L-methionine-binding positions include 181–182 (GE), Ser-215, 238–240 (SLH), and Asn-314. Residue Cys-357 is the S-methylcysteine intermediate of the active site.

Belongs to the radical SAM superfamily. RlmN family. [4Fe-4S] cluster is required as a cofactor.

The protein localises to the cytoplasm. It carries out the reaction adenosine(2503) in 23S rRNA + 2 reduced [2Fe-2S]-[ferredoxin] + 2 S-adenosyl-L-methionine = 2-methyladenosine(2503) in 23S rRNA + 5'-deoxyadenosine + L-methionine + 2 oxidized [2Fe-2S]-[ferredoxin] + S-adenosyl-L-homocysteine. The catalysed reaction is adenosine(37) in tRNA + 2 reduced [2Fe-2S]-[ferredoxin] + 2 S-adenosyl-L-methionine = 2-methyladenosine(37) in tRNA + 5'-deoxyadenosine + L-methionine + 2 oxidized [2Fe-2S]-[ferredoxin] + S-adenosyl-L-homocysteine. Specifically methylates position 2 of adenine 2503 in 23S rRNA and position 2 of adenine 37 in tRNAs. The chain is Probable dual-specificity RNA methyltransferase RlmN from Thermobifida fusca (strain YX).